Here is a 220-residue protein sequence, read N- to C-terminus: Aspartic protease inhibitor 2 (220 aa).

Positions 1-23 are cleaved as a signal peptide; the sequence is MMKCLFLLCLCLLPIVVFSSTFT. Residues 24 to 32 constitute a propeptide that is removed on maturation; that stretch reads SQNLIDLPS. Residues 26-31 carry the Vacuolar targeting signal motif; it reads NLIDLP. The N-linked (GlcNAc...) asparagine glycan is linked to Asn51. Cystine bridges form between Cys80–Cys125 and Cys174–Cys185.

This sequence belongs to the protease inhibitor I3 (leguminous Kunitz-type inhibitor) family. In terms of tissue distribution, tubers.

It is found in the vacuole. Inhibitor of cathepsin D (aspartic protease). May also inhibit trypsin and chymotrypsin (serine proteases). Protects the plant by inhibiting proteases of invading organisms. The protein is Aspartic protease inhibitor 2 of Solanum tuberosum (Potato).